The following is a 223-amino-acid chain: Voltage-dependent calcium channel gamma-1 subunit (223 aa).

At 1-10 (MSQTKTLKVR) the chain is on the cytoplasmic side. Residues 11 to 29 (VALLCILVGIVLALVAVVT) traverse the membrane as a helical segment. Residues 30–109 (DHWAVLSPHV…TQKEYSISAA (80 aa)) are Extracellular-facing. N-linked (GlcNAc...) asparagine glycosylation is found at Asn43 and Asn80. An intrachain disulfide couples Cys57 to Cys81. Residues 110–130 (AIAIFSLGFIIVGTLCALLSF) traverse the membrane as a helical segment. At 131–135 (RKKRD) the chain is on the cytoplasmic side. The helical transmembrane segment at 136–156 (YLLRPASMFYIFAGLCLSVSA) threads the bilayer. At 157–180 (EVMRQSVQRMVDSEHTAWIAHSLA) the chain is on the extracellular side. The chain crosses the membrane as a helical span at residues 181-205 (WSFICACVAAALLLVGGLALLLLAL). Residues 206–223 (PRMPRDPWESCMDAEPEH) lie on the Cytoplasmic side of the membrane.

It belongs to the PMP-22/EMP/MP20 family. CACNG subfamily. As to quaternary structure, component of a calcium channel complex consisting of a pore-forming alpha subunit (CACNA1S) and the ancillary subunits CACNB1 or CACNB2, CACNG1 and CACNA2D1. The channel complex contains alpha, beta, gamma and delta subunits in a 1:1:1:1 ratio, i.e. it contains either CACNB1 or CACNB2. Post-translationally, N-glycosylated.

The protein resides in the cell membrane. The protein localises to the sarcolemma. In terms of biological role, regulatory subunit of the voltage-gated calcium channel that gives rise to L-type calcium currents in skeletal muscle. Regulates channel inactivation kinetics. The polypeptide is Voltage-dependent calcium channel gamma-1 subunit (CACNG1) (Bos taurus (Bovine)).